A 441-amino-acid chain; its full sequence is Ribulose bisphosphate carboxylase large chain (441 aa).

The residue at position 5 (Lys5) is an N6,N6,N6-trimethyllysine. 2 residues coordinate substrate: Asn114 and Thr164. Lys166 functions as the Proton acceptor in the catalytic mechanism. Residue Lys168 coordinates substrate. 3 residues coordinate Mg(2+): Lys192, Asp194, and Glu195. Lys192 is modified (N6-carboxylysine). His285 (proton acceptor) is an active-site residue. Substrate contacts are provided by Arg286, His318, and Ser370.

This sequence belongs to the RuBisCO large chain family. Type I subfamily. In terms of assembly, heterohexadecamer of 8 large chains and 8 small chains; disulfide-linked. The disulfide link is formed within the large subunit homodimers. Mg(2+) serves as cofactor. The disulfide bond which can form in the large chain dimeric partners within the hexadecamer appears to be associated with oxidative stress and protein turnover.

Its subcellular location is the plastid. The protein localises to the chloroplast. The enzyme catalyses 2 (2R)-3-phosphoglycerate + 2 H(+) = D-ribulose 1,5-bisphosphate + CO2 + H2O. It carries out the reaction D-ribulose 1,5-bisphosphate + O2 = 2-phosphoglycolate + (2R)-3-phosphoglycerate + 2 H(+). RuBisCO catalyzes two reactions: the carboxylation of D-ribulose 1,5-bisphosphate, the primary event in carbon dioxide fixation, as well as the oxidative fragmentation of the pentose substrate in the photorespiration process. Both reactions occur simultaneously and in competition at the same active site. This chain is Ribulose bisphosphate carboxylase large chain, found in Drosera dichrosepala (Rusty sundew).